Consider the following 175-residue polypeptide: RNA pyrophosphohydrolase (175 aa).

The region spanning 6–149 (GYRPNVGIIL…KRQVYQQALT (144 aa)) is the Nudix hydrolase domain. The Nudix box signature appears at 38–59 (GGIKHGESPEQAMYRELYEEVG).

The protein belongs to the Nudix hydrolase family. RppH subfamily. A divalent metal cation is required as a cofactor.

Accelerates the degradation of transcripts by removing pyrophosphate from the 5'-end of triphosphorylated RNA, leading to a more labile monophosphorylated state that can stimulate subsequent ribonuclease cleavage. In Azoarcus sp. (strain BH72), this protein is RNA pyrophosphohydrolase.